A 234-amino-acid polypeptide reads, in one-letter code: Interleukin-34 (234 aa).

The signal sequence occupies residues 1–20 (MPQGLAWLRYLGILLGMALG). An N-linked (GlcNAc...) asparagine glycan is attached at N76. The interval 191–234 (EAPQPQPRSPASAQCEAAQLYPLPQPPSTSLPRVLGPSAGPPTQ) is disordered.

It belongs to the IL-34 family. In terms of assembly, homodimer. Interacts with CSF1R.

The protein localises to the secreted. Functionally, cytokine that promotes the proliferation, survival and differentiation of monocytes and macrophages. Promotes the release of pro-inflammatory chemokines, and thereby plays an important role in innate immunity and in inflammatory processes. Plays an important role in the regulation of osteoclast proliferation and differentiation, and in the regulation of bone resorption. Signaling via CSF1R and its downstream effectors stimulates phosphorylation of MAPK1/ERK2 AND MAPK3/ERK1. The protein is Interleukin-34 of Bos taurus (Bovine).